The primary structure comprises 277 residues: Undecaprenyl-diphosphatase 1 (277 aa).

8 consecutive transmembrane segments (helical) span residues 1 to 21 (MSLL…FLPI), 39 to 58 (AGFS…VILY), 85 to 105 (FWFA…GILF), 113 to 133 (FKAP…LIII), 147 to 167 (MTIW…IPGL), 191 to 211 (SFLL…DDLI), 226 to 246 (ASFV…LNLV), and 251 to 271 (LVYF…FQDA).

The protein belongs to the UppP family.

It is found in the cell membrane. It catalyses the reaction di-trans,octa-cis-undecaprenyl diphosphate + H2O = di-trans,octa-cis-undecaprenyl phosphate + phosphate + H(+). Its function is as follows. Catalyzes the dephosphorylation of undecaprenyl diphosphate (UPP). Confers resistance to bacitracin. The polypeptide is Undecaprenyl-diphosphatase 1 (Shouchella clausii (strain KSM-K16) (Alkalihalobacillus clausii)).